The sequence spans 317 residues: Acetyl-coenzyme A carboxylase carboxyl transferase subunit alpha (317 aa).

The CoA carboxyltransferase C-terminal domain maps to 40–293 (LEKRSADALK…GDIIAASLRS (254 aa)).

The protein belongs to the AccA family. Acetyl-CoA carboxylase is a heterohexamer composed of biotin carboxyl carrier protein (AccB), biotin carboxylase (AccC) and two subunits each of ACCase subunit alpha (AccA) and ACCase subunit beta (AccD).

The protein localises to the cytoplasm. It catalyses the reaction N(6)-carboxybiotinyl-L-lysyl-[protein] + acetyl-CoA = N(6)-biotinyl-L-lysyl-[protein] + malonyl-CoA. The protein operates within lipid metabolism; malonyl-CoA biosynthesis; malonyl-CoA from acetyl-CoA: step 1/1. Its function is as follows. Component of the acetyl coenzyme A carboxylase (ACC) complex. First, biotin carboxylase catalyzes the carboxylation of biotin on its carrier protein (BCCP) and then the CO(2) group is transferred by the carboxyltransferase to acetyl-CoA to form malonyl-CoA. This is Acetyl-coenzyme A carboxylase carboxyl transferase subunit alpha from Brucella canis (strain ATCC 23365 / NCTC 10854 / RM-666).